Here is a 141-residue protein sequence, read N- to C-terminus: Nucleoside diphosphate kinase (141 aa).

Residues Lys9, Phe57, Arg85, Thr91, Arg102, and Asn112 each coordinate ATP. The Pros-phosphohistidine intermediate role is filled by His115.

It belongs to the NDK family. As to quaternary structure, homotetramer. The cofactor is Mg(2+).

The protein localises to the cytoplasm. It carries out the reaction a 2'-deoxyribonucleoside 5'-diphosphate + ATP = a 2'-deoxyribonucleoside 5'-triphosphate + ADP. It catalyses the reaction a ribonucleoside 5'-diphosphate + ATP = a ribonucleoside 5'-triphosphate + ADP. In terms of biological role, major role in the synthesis of nucleoside triphosphates other than ATP. The ATP gamma phosphate is transferred to the NDP beta phosphate via a ping-pong mechanism, using a phosphorylated active-site intermediate. This chain is Nucleoside diphosphate kinase, found in Chlamydia trachomatis serovar L2 (strain ATCC VR-902B / DSM 19102 / 434/Bu).